A 271-amino-acid polypeptide reads, in one-letter code: 4-hydroxy-tetrahydrodipicolinate reductase (271 aa).

NAD(+) contacts are provided by residues 10–15 (GAGGRM), E36, 100–102 (GTT), and 124–127 (SGNM). H157 (proton donor/acceptor) is an active-site residue. H158 serves as a coordination point for (S)-2,3,4,5-tetrahydrodipicolinate. K161 functions as the Proton donor in the catalytic mechanism. 167–168 (GT) contacts (S)-2,3,4,5-tetrahydrodipicolinate.

This sequence belongs to the DapB family.

It localises to the cytoplasm. The catalysed reaction is (S)-2,3,4,5-tetrahydrodipicolinate + NAD(+) + H2O = (2S,4S)-4-hydroxy-2,3,4,5-tetrahydrodipicolinate + NADH + H(+). It catalyses the reaction (S)-2,3,4,5-tetrahydrodipicolinate + NADP(+) + H2O = (2S,4S)-4-hydroxy-2,3,4,5-tetrahydrodipicolinate + NADPH + H(+). It functions in the pathway amino-acid biosynthesis; L-lysine biosynthesis via DAP pathway; (S)-tetrahydrodipicolinate from L-aspartate: step 4/4. In terms of biological role, catalyzes the conversion of 4-hydroxy-tetrahydrodipicolinate (HTPA) to tetrahydrodipicolinate. The sequence is that of 4-hydroxy-tetrahydrodipicolinate reductase from Bradyrhizobium diazoefficiens (strain JCM 10833 / BCRC 13528 / IAM 13628 / NBRC 14792 / USDA 110).